We begin with the raw amino-acid sequence, 309 residues long: tRNA uridine(34) hydroxylase (309 aa).

The Rhodanese domain occupies 129-223 (SEPGTIVIDT…YLEEVPAEQS (95 aa)). The active-site Cysteine persulfide intermediate is the C183. The interval 288-309 (YAERQRQVELAQARGKRPHIGS) is disordered.

Belongs to the TrhO family.

The catalysed reaction is uridine(34) in tRNA + AH2 + O2 = 5-hydroxyuridine(34) in tRNA + A + H2O. Catalyzes oxygen-dependent 5-hydroxyuridine (ho5U) modification at position 34 in tRNAs. This is tRNA uridine(34) hydroxylase from Mesorhizobium japonicum (strain LMG 29417 / CECT 9101 / MAFF 303099) (Mesorhizobium loti (strain MAFF 303099)).